Reading from the N-terminus, the 441-residue chain is Probable D-serine dehydratase (441 aa).

Position 117 is an N6-(pyridoxal phosphate)lysine (lysine 117).

The protein belongs to the serine/threonine dehydratase family. DsdA subfamily. Requires pyridoxal 5'-phosphate as cofactor.

It catalyses the reaction D-serine = pyruvate + NH4(+). This chain is Probable D-serine dehydratase, found in Acinetobacter baylyi (strain ATCC 33305 / BD413 / ADP1).